The following is a 387-amino-acid chain: Peroxisomal membrane protein LPX1 (387 aa).

The interval 385–387 is peroxisomal targeting signal type 1; it reads QKL.

The protein localises to the peroxisome matrix. Its function is as follows. Has acyl esterase, lipase and phospholipase A activity. The sequence is that of Peroxisomal membrane protein LPX1 (LPX1) from Saccharomyces cerevisiae (strain ATCC 204508 / S288c) (Baker's yeast).